Consider the following 431-residue polypeptide: 3'3'-cGAMP-specific phosphodiesterase 1 (431 aa).

The region spanning 39–155 (DINHGHRVGY…IFLADRVDYL (117 aa)) is the HD domain. The region spanning 231–427 (GVEEIMSIAM…YYQLSIAESP (197 aa)) is the HD-GYP domain. A divalent metal cation is bound by residues histidine 288 and aspartate 289. The active-site Proton donor is lysine 292. 4 residues coordinate a divalent metal cation: histidine 317, histidine 341, histidine 342, and aspartate 370.

Monomer. Requires Ca(2+) as cofactor. Mg(2+) is required as a cofactor.

The catalysed reaction is 3',3'-cGAMP + H2O = 5'-pApG-3' + H(+). It carries out the reaction 5'-pApG-3' + H2O = 5'-ApG-3' + phosphate. Functionally, phosphodiesterase (PDE) that catalyzes the hydrolysis of 3'3'-cyclic GMP-AMP (3'3'-cGAMP), leading to linear 5'-pApG. Also displays 5'-nucleotidase activity, further hydrolyzing 5'-pApG to 5'-ApG. Counteracts the function of the 3'3'-cGAMP synthase DncV, and is involved in the modulation of intracellular 3'3'-cGAMP levels. Enhances bacterial chemotaxis and inhibits intestinal colonization in vivo. Thus exerts a crucial role in regulating bacterial infectivity through catalyzing 3'3'-cGAMP degradation. Is specific for 3'3'-cGAMP since it cannot degrade other cGAMP linkage isomers (3'2'-, 2'3'-, and 2'2'-cGAMPs). Is also able to hydrolyze c-di-GMP but not c-di-AMP. The polypeptide is 3'3'-cGAMP-specific phosphodiesterase 1 (Vibrio cholerae serotype O1 (strain ATCC 39315 / El Tor Inaba N16961)).